Consider the following 195-residue polypeptide: Transcriptional regulator LdrP (195 aa).

One can recognise an HTH crp-type domain in the interval 110-182 (GELRARIARY…YRRVYLLDLA (73 aa)). The H-T-H motif DNA-binding region spans 142–161 (HEEIADATASIRESVSKVLA).

In terms of biological role, activates transcription. Positively regulates PcrtB promoter upstream of the crtB operon in a cAMP-independent manner. Regulated genes include genes encoding DNA photolyase, phytoene synthase and cytochrome P450 monooxygenase, which are involved in carotenoid biosynthesis. Positively regulates the light-inducible gene cluster in the megaplasmid in a cAMP-independent manner. The chain is Transcriptional regulator LdrP from Thermus thermophilus (strain ATCC BAA-163 / DSM 7039 / HB27).